The sequence spans 357 residues: 3-isopropylmalate dehydrogenase (357 aa).

G75–E88 provides a ligand contact to NAD(+). Substrate-binding residues include R96, R106, R134, and D222. Mg(2+) contacts are provided by D222, D246, and D250. Residue G279–N291 coordinates NAD(+).

This sequence belongs to the isocitrate and isopropylmalate dehydrogenases family. LeuB type 1 subfamily. As to quaternary structure, homodimer. The cofactor is Mg(2+). Mn(2+) is required as a cofactor.

It localises to the cytoplasm. The catalysed reaction is (2R,3S)-3-isopropylmalate + NAD(+) = 4-methyl-2-oxopentanoate + CO2 + NADH. It functions in the pathway amino-acid biosynthesis; L-leucine biosynthesis; L-leucine from 3-methyl-2-oxobutanoate: step 3/4. Catalyzes the oxidation of 3-carboxy-2-hydroxy-4-methylpentanoate (3-isopropylmalate) to 3-carboxy-4-methyl-2-oxopentanoate. The product decarboxylates to 4-methyl-2 oxopentanoate. The polypeptide is 3-isopropylmalate dehydrogenase (Moorella thermoacetica (strain ATCC 39073 / JCM 9320)).